Reading from the N-terminus, the 354-residue chain is Protein-glutamate methylesterase/protein-glutamine glutaminase (354 aa).

The 118-residue stretch at 6 to 123 (RVLIVDDSAV…SQSLETLSAA (118 aa)) folds into the Response regulatory domain. Position 57 is a 4-aspartylphosphate (D57). Residues 159–351 (ARTTHQLLAV…GDLLKQLQTR (193 aa)) enclose the CheB-type methylesterase domain. Residues S171, H197, and D293 contribute to the active site.

The protein belongs to the CheB family. Phosphorylated by CheA. Phosphorylation of the N-terminal regulatory domain activates the methylesterase activity.

It is found in the cytoplasm. The catalysed reaction is [protein]-L-glutamate 5-O-methyl ester + H2O = L-glutamyl-[protein] + methanol + H(+). It carries out the reaction L-glutaminyl-[protein] + H2O = L-glutamyl-[protein] + NH4(+). Involved in chemotaxis. Part of a chemotaxis signal transduction system that modulates chemotaxis in response to various stimuli. Catalyzes the demethylation of specific methylglutamate residues introduced into the chemoreceptors (methyl-accepting chemotaxis proteins or MCP) by CheR. Also mediates the irreversible deamidation of specific glutamine residues to glutamic acid. This is Protein-glutamate methylesterase/protein-glutamine glutaminase from Bdellovibrio bacteriovorus (strain ATCC 15356 / DSM 50701 / NCIMB 9529 / HD100).